We begin with the raw amino-acid sequence, 215 residues long: Ribosomal RNA small subunit methyltransferase G (215 aa).

Residues glycine 78, leucine 83, 128–129, and arginine 146 each bind S-adenosyl-L-methionine; that span reads AE.

This sequence belongs to the methyltransferase superfamily. RNA methyltransferase RsmG family.

The protein resides in the cytoplasm. It catalyses the reaction guanosine(527) in 16S rRNA + S-adenosyl-L-methionine = N(7)-methylguanosine(527) in 16S rRNA + S-adenosyl-L-homocysteine. Specifically methylates the N7 position of guanine in position 527 of 16S rRNA. The protein is Ribosomal RNA small subunit methyltransferase G of Anaeromyxobacter dehalogenans (strain 2CP-C).